The chain runs to 132 residues: Fatty acid-binding protein, intestinal (132 aa).

The residue at position 2 (alanine 2) is an N-acetylalanine. Hexadecanoate-binding residues include tryptophan 83 and arginine 107. The tetradecanoate site is built by tryptophan 83 and arginine 107.

The protein belongs to the calycin superfamily. Fatty-acid binding protein (FABP) family.

It is found in the cytoplasm. Functionally, FABPs are thought to play a role in the intracellular transport of long-chain fatty acids and their acyl-CoA esters. FABP2 is probably involved in triglyceride-rich lipoprotein synthesis. Binds saturated long-chain fatty acids with a high affinity, but binds with a lower affinity to unsaturated long-chain fatty acids. FABP2 may also help maintain energy homeostasis by functioning as a lipid sensor. This chain is Fatty acid-binding protein, intestinal (FABP2), found in Sus scrofa (Pig).